The sequence spans 432 residues: Enolase (432 aa).

(2R)-2-phosphoglycerate is bound at residue Gln-163. Glu-205 serves as the catalytic Proton donor. Residues Asp-242, Glu-285, and Asp-312 each coordinate Mg(2+). (2R)-2-phosphoglycerate-binding residues include Lys-337, Arg-366, Ser-367, and Lys-388. Catalysis depends on Lys-337, which acts as the Proton acceptor.

The protein belongs to the enolase family. Requires Mg(2+) as cofactor.

Its subcellular location is the cytoplasm. It localises to the secreted. The protein localises to the cell surface. The enzyme catalyses (2R)-2-phosphoglycerate = phosphoenolpyruvate + H2O. Its pathway is carbohydrate degradation; glycolysis; pyruvate from D-glyceraldehyde 3-phosphate: step 4/5. Functionally, catalyzes the reversible conversion of 2-phosphoglycerate (2-PG) into phosphoenolpyruvate (PEP). It is essential for the degradation of carbohydrates via glycolysis. The chain is Enolase from Desulfovibrio desulfuricans (strain ATCC 27774 / DSM 6949 / MB).